Here is a 463-residue protein sequence, read N- to C-terminus: Sodium-coupled neutral amino acid transporter 7 (463 aa).

Serine 28 bears the Phosphoserine mark. 11 consecutive transmembrane segments (helical) span residues 56 to 76 (AVFI…PAAF), 82 to 102 (VAAG…GLVI), 130 to 150 (LCEV…LIII), 179 to 199 (FTIS…KEIG), 206 to 226 (FLSV…YIWP), 240 to 260 (ASWM…QCHV), 283 to 303 (AAMV…FLTF), 320 to 340 (VAVA…YPIL), 372 to 392 (VLQT…IPDI), 396 to 416 (ISVI…LCLI), and 429 to 449 (ASWW…AFIF).

This sequence belongs to the amino acid/polyamine transporter 2 family. Interacts with the mTORC1 complex; this interaction mediates the recruitment of mTORC1 to the lysosome and its subsequent activation. In terms of tissue distribution, highly expressed in the brain, including the hippocampus, especially in the granular layer of dentate gyrus cells and the pyramidal cell layer of the hippocampus, amygdala, thalamus, hypothalamus, in the layer of Purkinje cells in the cerebellum and the layers of cortex. Particularly strong expression in neurons of the ventromedial hypothalamus, basolateral amygdala, ventral tegmental area, and locus coeruleus. Not detected in glial cells, including astrocytes. In addition to brain, also expressed in the spinal cord (at protein level).

It localises to the lysosome membrane. Its subcellular location is the cell projection. The protein localises to the axon. The enzyme catalyses L-glutamine(in) + Na(+)(in) = L-glutamine(out) + Na(+)(out). The catalysed reaction is L-asparagine(in) + Na(+)(in) = L-asparagine(out) + Na(+)(out). Functionally, symporter that selectively cotransports sodium ions and amino acids, such as L-glutamine and L-asparagine from the lysosome into the cytoplasm and may participates in mTORC1 activation. The transport activity requires an acidic lysosomal lumen. This chain is Sodium-coupled neutral amino acid transporter 7, found in Mus musculus (Mouse).